The primary structure comprises 248 residues: Triosephosphate isomerase (248 aa).

9–11 is a substrate binding site; it reads NWK. The Electrophile role is filled by histidine 94. Glutamate 166 functions as the Proton acceptor in the catalytic mechanism. Substrate contacts are provided by residues glycine 172, serine 212, and 233 to 234; that span reads GG.

It belongs to the triosephosphate isomerase family. In terms of assembly, homodimer.

Its subcellular location is the cytoplasm. It carries out the reaction D-glyceraldehyde 3-phosphate = dihydroxyacetone phosphate. It participates in carbohydrate biosynthesis; gluconeogenesis. Its pathway is carbohydrate degradation; glycolysis; D-glyceraldehyde 3-phosphate from glycerone phosphate: step 1/1. Involved in the gluconeogenesis. Catalyzes stereospecifically the conversion of dihydroxyacetone phosphate (DHAP) to D-glyceraldehyde-3-phosphate (G3P). This chain is Triosephosphate isomerase, found in Alkaliphilus oremlandii (strain OhILAs) (Clostridium oremlandii (strain OhILAs)).